A 580-amino-acid polypeptide reads, in one-letter code: DNA ligase B (580 aa).

K135 serves as the catalytic N6-AMP-lysine intermediate.

The protein belongs to the NAD-dependent DNA ligase family. LigB subfamily.

It catalyses the reaction NAD(+) + (deoxyribonucleotide)n-3'-hydroxyl + 5'-phospho-(deoxyribonucleotide)m = (deoxyribonucleotide)n+m + AMP + beta-nicotinamide D-nucleotide.. Catalyzes the formation of phosphodiester linkages between 5'-phosphoryl and 3'-hydroxyl groups in double-stranded DNA using NAD as a coenzyme and as the energy source for the reaction. The chain is DNA ligase B from Photorhabdus laumondii subsp. laumondii (strain DSM 15139 / CIP 105565 / TT01) (Photorhabdus luminescens subsp. laumondii).